Consider the following 655-residue polypeptide: Broad substrate specificity ATP-binding cassette transporter ABCG2 (655 aa).

At 1–395 (MSSNSYEVSI…KNLLGNPQAS (395 aa)) the chain is on the cytoplasmic side. Residues 36–285 (LSFHNICYRV…FGAIGFRCEP (250 aa)) enclose the ABC transporter domain. Residues 79-86 (GPTGGGKS), 183-189 (RGVSGGE), Glu-210, and His-242 contribute to the ATP site. One can recognise an ABC transmembrane type-2 domain in the interval 389-651 (LGNPQASIAQ…TIAYLKLLFL (263 aa)). The helical transmembrane segment at 396–416 (IAQLIVTVFLGLVIGAIFYDL) threads the bilayer. At 417-428 (KNDPAGIQNRAG) the chain is on the extracellular side. The chain crosses the membrane as a helical span at residues 429–449 (VLFFLTTNQCFSSVSAVELLV). The Cytoplasmic portion of the chain corresponds to 450 to 477 (VEKKLFIHEYISGYYRVSSYFFGKLLSD). Residues 478–498 (LLPMRMLPSIIFTCITYFLLG) traverse the membrane as a helical segment. The Extracellular segment spans residues 499–506 (LKPKVEAF). A helical membrane pass occupies residues 507-527 (FIMMLTLMMVAYSASSMALAI). Residues 528–535 (AAGQSVVS) are Cytoplasmic-facing. The chain crosses the membrane as a helical span at residues 536–556 (IATLLMTISFVFMMIFSGLLV). Topologically, residues 557–630 (NLKTVVPWLS…ISPWGLWKNH (74 aa)) are extracellular. Cys-592 and Cys-608 are joined by a disulfide. Residues Asn-596 and Asn-600 are each glycosylated (N-linked (GlcNAc...) asparagine). Residues 631–651 (VALACMIVIFLTIAYLKLLFL) traverse the membrane as a helical segment. The Cytoplasmic portion of the chain corresponds to 652–655 (KKFS).

This sequence belongs to the ABC transporter superfamily. ABCG family. Eye pigment precursor importer (TC 3.A.1.204) subfamily. As to quaternary structure, homodimer; disulfide-linked. The minimal functional unit is a homodimer, but the major oligomeric form in plasma membrane is a homotetramer with possibility of higher order oligomerization up to homododecamers. Post-translationally, N-glycosylated. Glycosylation-deficient ABCG2 is normally expressed and functional. In terms of processing, phosphorylated. Phosphorylation may regulate the localization to the plasma membrane, the homooligomerization and therefore, the activity of the transporter.

It is found in the cell membrane. Its subcellular location is the apical cell membrane. It localises to the mitochondrion membrane. It catalyses the reaction ATP + H2O + xenobioticSide 1 = ADP + phosphate + xenobioticSide 2.. The catalysed reaction is urate(in) + ATP + H2O = urate(out) + ADP + phosphate + H(+). The enzyme catalyses indoxyl sulfate(in) + ATP + H2O = indoxyl sulfate(out) + ADP + phosphate + H(+). It carries out the reaction sphing-4-enine 1-phosphate(in) + ATP + H2O = sphing-4-enine 1-phosphate(out) + ADP + phosphate + H(+). It catalyses the reaction estrone 3-sulfate(in) + ATP + H2O = estrone 3-sulfate(out) + ADP + phosphate + H(+). The catalysed reaction is dehydroepiandrosterone 3-sulfate(in) + ATP + H2O = dehydroepiandrosterone 3-sulfate(out) + ADP + phosphate + H(+). The enzyme catalyses 4-methylumbelliferone sulfate(in) + ATP + H2O = 4-methylumbelliferone sulfate(out) + ADP + phosphate + H(+). It carries out the reaction 5,7-dimethyl-2-methylamino-4-(3-pyridylmethyl)-1,3-benzothiazol-6-yl beta-D-glucuronate(in) + ATP + H2O = 5,7-dimethyl-2-methylamino-4-(3-pyridylmethyl)-1,3-benzothiazol-6-yl beta-D-glucuronate(out) + ADP + phosphate + H(+). It catalyses the reaction 4-methylumbelliferone beta-D-glucuronate(in) + ATP + H2O = 4-methylumbelliferone beta-D-glucuronate(out) + ADP + phosphate + H(+). The catalysed reaction is 5,7-dimethyl-2-methylamino-4-(3-pyridylmethyl)-1,3-benzothiazol-6-yl sulfate(in) + ATP + H2O = 5,7-dimethyl-2-methylamino-4-(3-pyridylmethyl)-1,3-benzothiazol-6-yl sulfate(out) + ADP + phosphate + H(+). The enzyme catalyses 17beta-estradiol 17-O-(beta-D-glucuronate)(in) + ATP + H2O = 17beta-estradiol 17-O-(beta-D-glucuronate)(out) + ADP + phosphate + H(+). It carries out the reaction methotrexate(in) + ATP + H2O = methotrexate(out) + ADP + phosphate + H(+). It catalyses the reaction riboflavin(in) + ATP + H2O = riboflavin(out) + ADP + phosphate + H(+). The catalysed reaction is pheophorbide a(in) + ATP + H2O = pheophorbide a(out) + ADP + phosphate + H(+). The enzyme catalyses itaconate(in) + ATP + H2O = itaconate(out) + ADP + phosphate + H(+). Its function is as follows. Broad substrate specificity ATP-dependent transporter of the ATP-binding cassette (ABC) family that actively extrudes a wide variety of physiological compounds, dietary toxins and xenobiotics from cells. Involved in porphyrin homeostasis, mediating the export of protoporphyrin IX (PPIX) from both mitochondria to cytosol and cytosol to extracellular space, it also functions in the cellular export of heme. Also mediates the efflux of sphingosine-1-P from cells. Acts as a urate exporter functioning in both renal and extrarenal urate excretion. In kidney, it also functions as a physiological exporter of the uremic toxin indoxyl sulfate. Also involved in the excretion of steroids like estrone 3-sulfate/E1S, 3beta-sulfooxy-androst-5-en-17-one/DHEAS, and other sulfate conjugates. Mediates the secretion of the riboflavin and biotin vitamins into milk. Extrudes pheophorbide a, a phototoxic porphyrin catabolite of chlorophyll, reducing its bioavailability. Plays an important role in the exclusion of xenobiotics from the brain. It confers to cells a resistance to multiple drugs and other xenobiotics including mitoxantrone, pheophorbide, camptothecin, methotrexate, azidothymidine, and the anthracyclines daunorubicin and doxorubicin, through the control of their efflux. In placenta, it limits the penetration of drugs from the maternal plasma into the fetus. May play a role in early stem cell self-renewal by blocking differentiation. In inflammatory macrophages, exports itaconate from the cytosol to the extracellular compartment and limits the activation of TFEB-dependent lysosome biogenesis involved in antibacterial innate immune response. This is Broad substrate specificity ATP-binding cassette transporter ABCG2 (ABCG2) from Bos taurus (Bovine).